Here is a 391-residue protein sequence, read N- to C-terminus: Protein CapJ (391 aa).

Its pathway is capsule biogenesis; capsule polysaccharide biosynthesis. Required for the biosynthesis of type 1 capsular polysaccharide. The protein is Protein CapJ (capJ) of Staphylococcus aureus.